The sequence spans 486 residues: Receptor-interacting serine/threonine-protein kinase 3 (486 aa).

Serine 2 bears the Phosphoserine mark. One can recognise a Protein kinase domain in the interval leucine 22 to tyrosine 292. Residues valine 28–valine 36 and lysine 51 each bind ATP. Aspartate 143 (proton acceptor) is an active-site residue. Residue serine 165 is modified to Phosphoserine. The residue at position 187 (threonine 187) is a Phosphothreonine. Phosphoserine; by autocatalysis is present on serine 204. At threonine 231 the chain carries Phosphothreonine; by autocatalysis. The residue at position 232 (serine 232) is a Phosphoserine; by autocatalysis. Threonine 257 is modified (phosphothreonine). Serine 304 and serine 326 each carry phosphoserine. A disordered region spans residues glutamine 312 to aspartate 333. Threonine 338 carries the post-translational modification Phosphothreonine. Residues leucine 349 to glutamine 388 are disordered. Phosphoserine is present on residues serine 353, serine 369, and serine 380. Residues glutamine 366–aspartate 381 show a composition bias toward polar residues. Position 392 is a phosphothreonine (threonine 392). Residues leucine 440 to arginine 461 carry the RIP homotypic interaction motif (RHIM) motif. The disordered stretch occupies residues threonine 462–lysine 486. The residue at position 477 (arginine 477) is an Omega-N-methylarginine.

Belongs to the protein kinase superfamily. TKL Ser/Thr protein kinase family. Interacts (via RIP homotypic interaction motif) with RIPK1 (via RIP homotypic interaction motif); this interaction induces RIPK1 phosphorylation and formation of a RIPK1-RIPK3 necrosis-inducing complex. Interacts with MLKL; the interaction is direct and triggers necroptosis. Interacts with ZBP1 (via RIP homotypic interaction motif); interaction with ZBP1 activates RIPK3, triggering necroptosis. Upon TNF-induced necrosis, the RIPK1-RIPK3 dimer further interacts with PGAM5 and MLKL; the formation of this complex leads to PGAM5 phosphorylation and increase in PGAM5 phosphatase activity. Binds TRAF2 and is recruited to the TNFR-1 signaling complex. Interacts with PYGL, GLUL and GLUD1; these interactions result in activation of these metabolic enzymes. Interacts with BIRC2/c-IAP1, BIRC3/c-IAP2 and XIAP/BIRC4. Interacts with ARHGEF2. Interacts with PELI1 (via atypical FHA domain); the phosphorylated form at Thr-187 binds preferentially to PELI1. Interacts with BUB1B, TRAF2 and STUB1. Interacts with CASP6. Component of the AIM2 PANoptosome complex, a multiprotein complex that drives inflammatory cell death (PANoptosis). In terms of assembly, (Microbial infection) Interacts (via RIP homotypic interaction motif) with murid herpesvirus protein RIR1; this interaction disrupts RIP3-RIP1 interactions characteristic of TNF-alpha induced necroptosis, thereby suppressing this death pathway. In terms of processing, RIPK1 and RIPK3 undergo reciprocal auto- and trans-phosphorylation. Autophosphorylated following interaction with ZBP1. Phosphorylation of Ser-204 plays a role in the necroptotic function of RIPK3. Autophosphorylates at Thr-231 and Ser-232 following activation by ZBP1: phosphorylation at these sites is a hallmark of necroptosis and is required for binding MLKL. Phosphorylation at Thr-187 is important for its kinase activity, interaction with PELI1 and for its ability to mediate TNF-induced necroptosis. Polyubiquitinated with 'Lys-48' and 'Lys-63'-linked chains by BIRC2/c-IAP1 and BIRC3/c-IAP2, leading to activation of NF-kappa-B. Ubiquitinated by STUB1 leading to its subsequent proteasome-dependent degradation. As to expression, expressed in embryo and in adult spleen, liver, testis, heart, brain and lung.

It localises to the cytoplasm. It is found in the cytosol. Its subcellular location is the nucleus. The enzyme catalyses L-seryl-[protein] + ATP = O-phospho-L-seryl-[protein] + ADP + H(+). It catalyses the reaction L-threonyl-[protein] + ATP = O-phospho-L-threonyl-[protein] + ADP + H(+). Activity is stimulated by ZBP1, which senses double-stranded Z-RNA structures. RIPK3-dependent necroptosis is inhibited by RIPK1: RIPK1 prevents the ZBP1-induced activation of RIPK3 via FADD-mediated recruitment of CASP8, which cleaves RIPK1 and limits TNF-induced necroptosis. Inhibited by type II inhibitor 1-(4-fluorophenyl)-N-[3-fluoro-4-(1H-pyrrolo[2,3-b]pyridin-4-yloxy)phenyl]-2-oxo-1,2-dihydropyridine-3-carboxamide. Its function is as follows. Serine/threonine-protein kinase that activates necroptosis and apoptosis, two parallel forms of cell death. Necroptosis, a programmed cell death process in response to death-inducing TNF-alpha family members, is triggered by RIPK3 following activation by ZBP1. Activated RIPK3 forms a necrosis-inducing complex and mediates phosphorylation of MLKL, promoting MLKL localization to the plasma membrane and execution of programmed necrosis characterized by calcium influx and plasma membrane damage. In addition to TNF-induced necroptosis, necroptosis can also take place in the nucleus in response to orthomyxoviruses infection: following ZBP1 activation, which senses double-stranded Z-RNA structures, nuclear RIPK3 catalyzes phosphorylation and activation of MLKL, promoting disruption of the nuclear envelope and leakage of cellular DNA into the cytosol. Also regulates apoptosis: apoptosis depends on RIPK1, FADD and CASP8, and is independent of MLKL and RIPK3 kinase activity. Phosphorylates RIPK1: RIPK1 and RIPK3 undergo reciprocal auto- and trans-phosphorylation. In some cell types, also able to restrict viral replication by promoting cell death-independent responses. In response to flavivirus infection in neurons, promotes a cell death-independent pathway that restricts viral replication: together with ZBP1, promotes a death-independent transcriptional program that modifies the cellular metabolism via up-regulation expression of the enzyme ACOD1/IRG1 and production of the metabolite itaconate. Itaconate inhibits the activity of succinate dehydrogenase, generating a metabolic state in neurons that suppresses replication of viral genomes. RIPK3 binds to and enhances the activity of three metabolic enzymes: GLUL, GLUD1, and PYGL. These metabolic enzymes may eventually stimulate the tricarboxylic acid cycle and oxidative phosphorylation, which could result in enhanced ROS production. This Mus musculus (Mouse) protein is Receptor-interacting serine/threonine-protein kinase 3.